We begin with the raw amino-acid sequence, 518 residues long: MFKIMKDFTEQEKIIVLDFGSQYNQLITRRIREFGVYSELHPHTITVEEMKALNPTGIIFSGGPNSVYDEDAFRADERIFDMGIPILGICYGMQLMTTHFGGKVERAKDREYGKADIHVENPSRLFAGLPTDQVVWMSHGDLVVEEPAGFEVTATSKSCPIAGIADEDRLLYGVQFHPEVRHSAYGNELLKNFALNICGCKGDWTMENFSEVEIAKIQEIVGDKKVLLALSGGVDSSVVGVLIHKAIGDQLTCIFVDHGLLRKGEADQVMATLQGEFNMNIIKVDAKKRFMDKLAGVSDPEQKRKIIGNEFIYVFDDEANKLDGVEFLAQGTLYTDIIESGTATAQTIKSHHNVGGLPEDMQFKLIEPLNTLFKDEVRALGTELGMPDAIVWRQPFPGPGLGIRVLGEITEEKLEIVRDSDYILREEIKNAGLEREIWQYFTALPNIRSVGVMGDGRTYDHTVVVRAVTSIDGMTADWARIPWDVLEKISVRIVNEVDHVNRVVYDITSKPPATVEWE.

The Glutamine amidotransferase type-1 domain occupies Lys13–Asp203. Cys90 acts as the Nucleophile in catalysis. Catalysis depends on residues His177 and Glu179. Positions Trp204–Arg393 constitute a GMPS ATP-PPase domain. Ser231 to Ser237 provides a ligand contact to ATP.

In terms of assembly, homodimer.

The catalysed reaction is XMP + L-glutamine + ATP + H2O = GMP + L-glutamate + AMP + diphosphate + 2 H(+). The protein operates within purine metabolism; GMP biosynthesis; GMP from XMP (L-Gln route): step 1/1. Functionally, catalyzes the synthesis of GMP from XMP. The protein is GMP synthase [glutamine-hydrolyzing] of Listeria innocua serovar 6a (strain ATCC BAA-680 / CLIP 11262).